A 123-amino-acid polypeptide reads, in one-letter code: Large ribosomal subunit protein bL17 (123 aa).

Belongs to the bacterial ribosomal protein bL17 family. In terms of assembly, part of the 50S ribosomal subunit. Contacts protein L32.

The polypeptide is Large ribosomal subunit protein bL17 (Staphylococcus haemolyticus (strain JCSC1435)).